The chain runs to 161 residues: Dihydrofolate reductase (161 aa).

The 156-residue stretch at 2–157 folds into the DHFR domain; the sequence is TLSIIVAHDK…IPHTFLHLVR (156 aa). Position 6-8 (6-8) interacts with substrate; that stretch reads IVA. NADP(+) is bound by residues 7–8 and 15–20; these read VA and IGYQNQ. Aspartate 28 contacts substrate. Residue 44–47 coordinates NADP(+); it reads GRKT. Substrate is bound at residue arginine 58. Residues 63-66 and 93-98 each bind NADP(+); these read LTNQ and FGGQTL. Threonine 112 contacts substrate.

It belongs to the dihydrofolate reductase family.

It catalyses the reaction (6S)-5,6,7,8-tetrahydrofolate + NADP(+) = 7,8-dihydrofolate + NADPH + H(+). It participates in cofactor biosynthesis; tetrahydrofolate biosynthesis; 5,6,7,8-tetrahydrofolate from 7,8-dihydrofolate: step 1/1. Its function is as follows. Key enzyme in folate metabolism. Catalyzes an essential reaction for de novo glycine and purine synthesis, and for DNA precursor synthesis. This Staphylococcus epidermidis protein is Dihydrofolate reductase (folA).